The sequence spans 426 residues: Glutamate-1-semialdehyde 2,1-aminomutase (426 aa).

Lysine 265 is modified (N6-(pyridoxal phosphate)lysine).

Belongs to the class-III pyridoxal-phosphate-dependent aminotransferase family. HemL subfamily. In terms of assembly, homodimer. Pyridoxal 5'-phosphate serves as cofactor.

It is found in the cytoplasm. It catalyses the reaction (S)-4-amino-5-oxopentanoate = 5-aminolevulinate. The protein operates within porphyrin-containing compound metabolism; protoporphyrin-IX biosynthesis; 5-aminolevulinate from L-glutamyl-tRNA(Glu): step 2/2. The chain is Glutamate-1-semialdehyde 2,1-aminomutase from Salmonella typhi.